Reading from the N-terminus, the 299-residue chain is Oxygen-dependent coproporphyrinogen-III oxidase (299 aa).

Residue Ser92 participates in substrate binding. 2 residues coordinate a divalent metal cation: His96 and His106. The active-site Proton donor is His106. 108 to 110 (NVR) is a binding site for substrate. A divalent metal cation-binding residues include His145 and His175. Positions 240–275 (YVEFNLVWDRGTLFGLQTGGRTESILMSMPPLVRWE) are important for dimerization. Residue 258–260 (GGR) coordinates substrate.

It belongs to the aerobic coproporphyrinogen-III oxidase family. Homodimer. It depends on a divalent metal cation as a cofactor.

The protein resides in the cytoplasm. It carries out the reaction coproporphyrinogen III + O2 + 2 H(+) = protoporphyrinogen IX + 2 CO2 + 2 H2O. It functions in the pathway porphyrin-containing compound metabolism; protoporphyrin-IX biosynthesis; protoporphyrinogen-IX from coproporphyrinogen-III (O2 route): step 1/1. Its function is as follows. Involved in the heme biosynthesis. Catalyzes the aerobic oxidative decarboxylation of propionate groups of rings A and B of coproporphyrinogen-III to yield the vinyl groups in protoporphyrinogen-IX. This is Oxygen-dependent coproporphyrinogen-III oxidase from Klebsiella pneumoniae (strain 342).